A 434-amino-acid polypeptide reads, in one-letter code: Homogentisate 1,2-dioxygenase (434 aa).

The Proton acceptor role is filled by His-289. The Fe cation site is built by His-332 and Glu-338. 2 residues coordinate homogentisate: Tyr-347 and His-368. His-368 is a Fe cation binding site.

The protein belongs to the homogentisate dioxygenase family. In terms of assembly, hexamer; dimer of trimers. Fe cation serves as cofactor.

It catalyses the reaction homogentisate + O2 = 4-maleylacetoacetate + H(+). It participates in amino-acid degradation; L-phenylalanine degradation; acetoacetate and fumarate from L-phenylalanine: step 4/6. Functionally, involved in the catabolism of homogentisate (2,5-dihydroxyphenylacetate or 2,5-OH-PhAc), a central intermediate in the degradation of phenylalanine and tyrosine. Catalyzes the oxidative ring cleavage of the aromatic ring of homogentisate to yield maleylacetoacetate. The polypeptide is Homogentisate 1,2-dioxygenase (Pseudomonas syringae pv. tomato (strain ATCC BAA-871 / DC3000)).